A 342-amino-acid polypeptide reads, in one-letter code: tRNA dimethylallyltransferase (342 aa).

39–46 contributes to the ATP binding site; it reads GPTGSGKT. 41 to 46 is a binding site for substrate; that stretch reads TGSGKT. The tract at residues 64 to 67 is interaction with substrate tRNA; that stretch reads DSMQ.

This sequence belongs to the IPP transferase family. Monomer. Requires Mg(2+) as cofactor.

The catalysed reaction is adenosine(37) in tRNA + dimethylallyl diphosphate = N(6)-dimethylallyladenosine(37) in tRNA + diphosphate. In terms of biological role, catalyzes the transfer of a dimethylallyl group onto the adenine at position 37 in tRNAs that read codons beginning with uridine, leading to the formation of N6-(dimethylallyl)adenosine (i(6)A). The sequence is that of tRNA dimethylallyltransferase from Chlamydia pneumoniae (Chlamydophila pneumoniae).